A 162-amino-acid chain; its full sequence is NADH-quinone oxidoreductase subunit I (162 aa).

4Fe-4S ferredoxin-type domains are found at residues 54-83 (RRYENGEERCIACKLCEAVCPAMAITIESE) and 93-122 (TRYDIDLTKCIFCGFCEESCPVDSIVETQI). [4Fe-4S] cluster-binding residues include cysteine 63, cysteine 66, cysteine 69, cysteine 73, cysteine 102, cysteine 105, cysteine 108, and cysteine 112.

This sequence belongs to the complex I 23 kDa subunit family. NDH-1 is composed of 14 different subunits. Subunits NuoA, H, J, K, L, M, N constitute the membrane sector of the complex. Requires [4Fe-4S] cluster as cofactor.

It is found in the cell inner membrane. The catalysed reaction is a quinone + NADH + 5 H(+)(in) = a quinol + NAD(+) + 4 H(+)(out). Functionally, NDH-1 shuttles electrons from NADH, via FMN and iron-sulfur (Fe-S) centers, to quinones in the respiratory chain. The immediate electron acceptor for the enzyme in this species is believed to be ubiquinone. Couples the redox reaction to proton translocation (for every two electrons transferred, four hydrogen ions are translocated across the cytoplasmic membrane), and thus conserves the redox energy in a proton gradient. The polypeptide is NADH-quinone oxidoreductase subunit I (Burkholderia vietnamiensis (strain G4 / LMG 22486) (Burkholderia cepacia (strain R1808))).